Consider the following 404-residue polypeptide: Cysteine desulfurase IscS (404 aa).

Residues Ala-75 to Thr-76, Asn-155, Gln-183, and Ser-203 to His-205 each bind pyridoxal 5'-phosphate. Lys-206 is subject to N6-(pyridoxal phosphate)lysine. Residue Thr-243 coordinates pyridoxal 5'-phosphate. Cys-328 functions as the Cysteine persulfide intermediate in the catalytic mechanism. Cys-328 contacts [2Fe-2S] cluster.

This sequence belongs to the class-V pyridoxal-phosphate-dependent aminotransferase family. NifS/IscS subfamily. Homodimer. Forms a heterotetramer with IscU, interacts with other sulfur acceptors. The cofactor is pyridoxal 5'-phosphate.

It is found in the cytoplasm. The catalysed reaction is (sulfur carrier)-H + L-cysteine = (sulfur carrier)-SH + L-alanine. The protein operates within cofactor biosynthesis; iron-sulfur cluster biosynthesis. Its function is as follows. Master enzyme that delivers sulfur to a number of partners involved in Fe-S cluster assembly, tRNA modification or cofactor biosynthesis. Catalyzes the removal of elemental sulfur atoms from cysteine to produce alanine. Functions as a sulfur delivery protein for Fe-S cluster synthesis onto IscU, an Fe-S scaffold assembly protein, as well as other S acceptor proteins. The polypeptide is Cysteine desulfurase IscS (Vibrio cholerae serotype O1 (strain M66-2)).